The sequence spans 341 residues: Golgi-associated RAB2 interactor protein 1B (341 aa).

This sequence belongs to the GARIN family. Expressed in testis (at protein level).

It is found in the golgi apparatus. Functionally, RAB2B effector protein required for accurate acrosome formation and normal male fertility. In complex with RAB2A/RAB2B, seems to suppress excessive vesicle trafficking during acrosome formation. This is Golgi-associated RAB2 interactor protein 1B from Mus musculus (Mouse).